The sequence spans 553 residues: Protein PNS1 (553 aa).

The span at 1 to 17 shows a compositional bias: pro residues; the sequence is MYGKSGPPPEGYVPQHP. Positions 1 to 49 are disordered; that stretch reads MYGKSGPPPEGYVPQHPPAQGYAPHNPPPGYVHENPFQEPVPQGQEYSP. Residues 1–95 lie on the Cytoplasmic side of the membrane; the sequence is MYGKSGPPPE…AGNRLKFNDW (95 aa). Residues 96–116 traverse the membrane as a helical segment; the sequence is PFTIIFLLTVGAFIAVAVLTL. At 117–143 the chain is on the extracellular side; the sequence is RGWSLSPTSNGSGIYDGDNTHTLNTNA. N-linked (GlcNAc...) asparagine glycosylation occurs at N126. A helical transmembrane segment spans residues 144–164; the sequence is AILLLISCGVAVALSVFGLVL. Over 165 to 170 the chain is Cytoplasmic; the sequence is AGMYTK. A helical membrane pass occupies residues 171–191; that stretch reads FFIYAAMILNTVVGLGTAITY. The Extracellular portion of the chain corresponds to 192–196; the sequence is LVLRH. A helical membrane pass occupies residues 197–217; the sequence is WSAGIVFMIFTILTAVCYWLM. Residues 218 to 243 are Cytoplasmic-facing; it reads RSRIPFSVAVLRTVMSVMKKHPQTWL. Residues 244-264 form a helical membrane-spanning segment; it reads VSLLGTIVSAAFSVIFSVVLV. The Extracellular segment spans residues 265–288; it reads ATYIKYDPKSENGGCDVSGGSCSR. The chain crosses the membrane as a helical span at residues 289-309; the sequence is GKLIGILVLVFFCGFYISEVI. The Cytoplasmic portion of the chain corresponds to 310-346; that stretch reads RNVIHCTIAGIYGCWYYFSKSDQGMPRWPAFGSLKRA. The helical transmembrane segment at 347 to 367 threads the bilayer; the sequence is LTTSFGSICFGSLIVSLIQLL. Residues 368-385 lie on the Extracellular side of the membrane; sequence RQIIQLLRNGIISGISDS. A helical transmembrane segment spans residues 386–406; that stretch reads GWMQCLWLILDAVVGVFEWMA. The Cytoplasmic portion of the chain corresponds to 407–450; that stretch reads EYFNHYAYCFIALYGKPYLRAAKETWHMLREKGIDALINDNLIN. Residues 451–471 form a helical membrane-spanning segment; it reads LALGFYTLFVGYTTALFSYLF. At 472-483 the chain is on the extracellular side; it reads LRFTKPDYNSGG. Residues 484–504 form a helical membrane-spanning segment; it reads GFNAVLMAFSFLIAIQLTHVA. The Cytoplasmic segment spans residues 505–553; sequence TETIRSGTATFFVALGNDPEIFRVSYPQRFDEIFRAYPDVLNKLSHQHV.

The protein belongs to the CTL (choline transporter-like) family.

The protein resides in the cell membrane. In terms of biological role, probably involved in transport through the plasma membrane. This Eremothecium gossypii (strain ATCC 10895 / CBS 109.51 / FGSC 9923 / NRRL Y-1056) (Yeast) protein is Protein PNS1 (PNS1).